A 160-amino-acid polypeptide reads, in one-letter code: CXXC motif containing zinc binding protein (160 aa).

Positions 33, 36, 67, and 70 each coordinate Zn(2+). Serine 75 carries the phosphoserine modification.

This sequence belongs to the UPF0587 family. Monomer.

This is CXXC motif containing zinc binding protein (Czib) from Mus musculus (Mouse).